The primary structure comprises 252 residues: C-type lectin domain family 2 member D3 (252 aa).

The interval Met1–Arg58 is disordered. Residues Met1–Tyr78 are Cytoplasmic-facing. Polar residues predominate over residues Gly16–Gln29. A compositionally biased stretch (low complexity) spans Ser30–Ser43. Residues Gly79–Val99 form a helical; Signal-anchor for type II membrane protein membrane-spanning segment. The Extracellular portion of the chain corresponds to Lys100–Gln252. One can recognise a C-type lectin domain in the interval Tyr137–Ser242. A glycan (N-linked (GlcNAc...) asparagine) is linked at Asn150. A disulfide bond links Cys158 and Cys241.

It is found in the cell membrane. Its function is as follows. Lectin-type cell surface receptor. The polypeptide is C-type lectin domain family 2 member D3 (Clec2d3) (Rattus norvegicus (Rat)).